The sequence spans 450 residues: Folate synthesis bifunctional protein (450 aa).

The tract at residues 1–166 (MTTWNFVCLG…TFAELAAIYP (166 aa)) is HPPK. The Pterin-binding domain maps to 180–441 (TQIMGIVNVT…QVEGNRRVLA (262 aa)). The segment at 182 to 450 (IMGIVNVTDD…AAAAWSGMPV (269 aa)) is DHPS. Asn187 provides a ligand contact to Mg(2+). Residues Thr227, Asp267, Asn287, Asp358, Lys395, and 429–431 (RVH) contribute to the (7,8-dihydropterin-6-yl)methyl diphosphate site.

This sequence in the C-terminal section; belongs to the DHPS family. In the N-terminal section; belongs to the HPPK family. The cofactor is Mg(2+).

It catalyses the reaction 6-hydroxymethyl-7,8-dihydropterin + ATP = (7,8-dihydropterin-6-yl)methyl diphosphate + AMP + H(+). The catalysed reaction is (7,8-dihydropterin-6-yl)methyl diphosphate + 4-aminobenzoate = 7,8-dihydropteroate + diphosphate. It participates in cofactor biosynthesis; tetrahydrofolate biosynthesis; 2-amino-4-hydroxy-6-hydroxymethyl-7,8-dihydropteridine diphosphate from 7,8-dihydroneopterin triphosphate: step 4/4. It functions in the pathway cofactor biosynthesis; tetrahydrofolate biosynthesis; 7,8-dihydrofolate from 2-amino-4-hydroxy-6-hydroxymethyl-7,8-dihydropteridine diphosphate and 4-aminobenzoate: step 1/2. This chain is Folate synthesis bifunctional protein (folKP), found in Chlamydia muridarum (strain MoPn / Nigg).